A 185-amino-acid chain; its full sequence is Ribosome-recycling factor (185 aa).

The protein belongs to the RRF family.

The protein resides in the cytoplasm. Functionally, responsible for the release of ribosomes from messenger RNA at the termination of protein biosynthesis. May increase the efficiency of translation by recycling ribosomes from one round of translation to another. The sequence is that of Ribosome-recycling factor from Histophilus somni (strain 2336) (Haemophilus somnus).